Reading from the N-terminus, the 380-residue chain is Probable peptidoglycan glycosyltransferase FtsW (380 aa).

The next 10 helical transmembrane spans lie at 14–34 (LLWC…SSSI), 52–72 (ILYL…PISF), 79–99 (IILL…NSIH), 112–131 (MQPS…NYLS), 141–161 (FGGF…LLVE), 162–182 (PDLG…FISG), 188–208 (FIPT…KSPY), 268–288 (IIGE…IFFI), 304–324 (IFFS…QTLI), and 341–361 (PLIS…IILI).

The protein belongs to the SEDS family. FtsW subfamily.

It is found in the cell membrane. It catalyses the reaction [GlcNAc-(1-&gt;4)-Mur2Ac(oyl-L-Ala-gamma-D-Glu-L-Lys-D-Ala-D-Ala)](n)-di-trans,octa-cis-undecaprenyl diphosphate + beta-D-GlcNAc-(1-&gt;4)-Mur2Ac(oyl-L-Ala-gamma-D-Glu-L-Lys-D-Ala-D-Ala)-di-trans,octa-cis-undecaprenyl diphosphate = [GlcNAc-(1-&gt;4)-Mur2Ac(oyl-L-Ala-gamma-D-Glu-L-Lys-D-Ala-D-Ala)](n+1)-di-trans,octa-cis-undecaprenyl diphosphate + di-trans,octa-cis-undecaprenyl diphosphate + H(+). The protein operates within cell wall biogenesis; peptidoglycan biosynthesis. In terms of biological role, peptidoglycan polymerase that is essential for cell division. The protein is Probable peptidoglycan glycosyltransferase FtsW of Buchnera aphidicola subsp. Baizongia pistaciae (strain Bp).